The chain runs to 240 residues: Thiopurine S-methyltransferase (240 aa).

S-adenosyl-L-methionine is bound at residue 24–35 (WKEKWVTRHISF). Phosphoserine is present on Ser-34. Residue Phe-35 participates in substrate binding. N6-acetyllysine is present on Lys-53. S-adenosyl-L-methionine is bound by residues Leu-64, Glu-85, 129 to 130 (SI), and Arg-147.

It belongs to the class I-like SAM-binding methyltransferase superfamily. TPMT family. In terms of assembly, monomer.

The protein localises to the cytoplasm. It catalyses the reaction S-adenosyl-L-methionine + a thiopurine = S-adenosyl-L-homocysteine + a thiopurine S-methylether.. The enzyme catalyses mercaptopurine + S-adenosyl-L-methionine = 6-methylthiopurine + S-adenosyl-L-homocysteine + H(+). Catalyzes the S-methylation of thiopurine drugs such as 6-mercaptopurine (also called mercaptopurine, 6-MP or its brand name Purinethol) using S-adenosyl-L-methionine as the methyl donor. TPMT activity modulates the cytotoxic effects of thiopurine prodrugs. A natural substrate for this enzyme has yet to be identified. This is Thiopurine S-methyltransferase (Tpmt) from Mus musculus (Mouse).